The sequence spans 413 residues: Probable tRNA pseudouridine synthase D (413 aa).

Catalysis depends on D97, which acts as the Nucleophile. The TRUD domain occupies 167–370 (AVPNYYGYQR…YGSYRRARLE (204 aa)).

The protein belongs to the pseudouridine synthase TruD family.

It catalyses the reaction uridine(13) in tRNA = pseudouridine(13) in tRNA. Functionally, could be responsible for synthesis of pseudouridine from uracil-13 in transfer RNAs. In Pyrobaculum arsenaticum (strain DSM 13514 / JCM 11321 / PZ6), this protein is Probable tRNA pseudouridine synthase D.